A 952-amino-acid chain; its full sequence is MKLPGQGDFESSDAHENAHSEEPDSGLGPGPGLNGPSGIDIGESQVSKDPLLFIQLNELLGWPQALEWRETGRWLLFEEKLDMGAGRWSAPHVPTLELPSLQKLRSLLAEGIVLLDCQAQSLLELVEQVVSGESLSPELRGQLQALLLQRPQHHIQTMGIRPCRESNAFRKASRDEDAPLKHQNPLRQKLPAGAEAAAVLAGELGFLEQPLGAFVRLRNPIVLEPLTEMILPSRFFCLLLGPPTLGRSYHEMGRAAAVLLSDPQFQWSVRRASHLPDLLAALDAFLQEVTALPPGRWDRTARIPPPKYLPSQHKRFPSKLQEVTSLSRQSAALAEDKHHHGPHTPIPELQRTGRLFGGLIQDVRRKACWYTSDFLDALHPQCFSAVFYIYLATVTNAITFGGLLGDATEGAQGVLESFLGTAVAGAAFCLMAGQPLTILSSTGPVLVFERLLFSFSRDYSLDYLPFRLWVGIWVTAFCLALVATEASLLVRYFTRFTEEGFCALISLIFIYDAMGKMLNLIRAYPIQRPGSSAYGCFCQYPGTGGNTSEWTSAKLKDTEDILSVPGLVNASFLPPPECIRQGGHPLGPSCHTVPDIAFFSLLLFFTSFLCAIALKHIKNSRFFPSVVRKVLGDFSSVLAILLGCGLDTFLGLATPKLLVPTEFKPTLSGRGWLVSPFGANPWWLSVAAALPALLLSILIFMDQQITAVILNRAEYRLQKGAGFHLDLFCVAVLMLFTSALGLPWYVSATVISLAHIDSLRRESKACIPGEAPNFLGIREQRLTGLVVFVLTGVSIFLAPVLKFIPMPVLYGIFLYMGVAALSSIQFVKRVQLLLMPRKHQPDMLLLRHVPLSRVHLFTAIQLACLGLLWVVKSTPAAIVFPLMLLGLVAIRKALEWVFSPQELLWLDELMPEEEETIPENRSEPEHLFSGNDSEDSELMYQPKAPEINISVN.

A disordered region spans residues 1–41; it reads MKLPGQGDFESSDAHENAHSEEPDSGLGPGPGLNGPSGIDI. Residues 12 to 22 are compositionally biased toward basic and acidic residues; the sequence is SDAHENAHSEE. A run of 4 helical transmembrane segments spans residues 385 to 405, 413 to 433, 470 to 490, and 501 to 521; these read AVFYIYLATVTNAITFGGLLG, GVLESFLGTAVAGAAFCLMAG, VGIWVTAFCLALVATEASLLV, and FCALISLIFIYDAMGKMLNLI. N-linked (GlcNAc...) asparagine glycans are attached at residues Asn-546 and Asn-569. The next 7 helical transmembrane spans lie at 593-613, 634-654, 681-701, 727-747, 784-804, 807-827, and 870-890; these read VPDIAFFSLLLFFTSFLCAIA, FSSVLAILLGCGLDTFLGLAT, PWWLSVAAALPALLLSILIFM, LFCVAVLMLFTSALGLPWYVS, GLVVFVLTGVSIFLAPVLKFI, PVLYGIFLYMGVAALSSIQFV, and VVKSTPAAIVFPLMLLGLVAI. Positions 915-938 are disordered; the sequence is ETIPENRSEPEHLFSGNDSEDSEL. N-linked (GlcNAc...) asparagine glycosylation is found at Asn-920, Asn-931, and Asn-948.

It belongs to the anion exchanger (TC 2.A.31) family. As to expression, expressed in submandibular gland (SMG) duct and cortical collecting duct (CCD) of kidney. Lower expressed in duodenal villi.

It localises to the basolateral cell membrane. The enzyme catalyses 2 hydrogencarbonate(out) + chloride(in) + Na(+)(out) = 2 hydrogencarbonate(in) + chloride(out) + Na(+)(in). The catalysed reaction is K(+)(in) + 2 hydrogencarbonate(in) + chloride(out) = K(+)(out) + 2 hydrogencarbonate(out) + chloride(in). It catalyses the reaction Li(+)(in) + 2 hydrogencarbonate(in) + chloride(out) = Li(+)(out) + 2 hydrogencarbonate(out) + chloride(in). It carries out the reaction Rb(+)(in) + 2 hydrogencarbonate(in) + chloride(out) = Rb(+)(out) + 2 hydrogencarbonate(out) + chloride(in). The enzyme catalyses Cs(+)(in) + 2 hydrogencarbonate(in) + chloride(out) = Cs(+)(out) + 2 hydrogencarbonate(out) + chloride(in). Cl(-)/HCO3(-) exchanger activity is substantially increased in response to 5 uM isoproterenol. Cl(-)/HCO3(-) exchanger activity is increased by both forskolin and coexpression with the catalytic subunit alpha of PKA. Electroneutral Cl(-)/HCO3(-) antiporter that favors chloride ion entry and efflux of hydrogencarbonate and sodium ion across the basolateral membrane and may participate in salivary secretion. Also mediates Cl(-)/HCO3(-) exchange activity in the presence of K(+) as well as Cs(+), Li(+), and Rb(+). Does not contribute to Cl(-)/HCO3(-) exchanger in the apical membrane of the upper villous epithelium. The protein is Anion exchange protein 4 of Mus musculus (Mouse).